Reading from the N-terminus, the 188-residue chain is Peptide deformylase (188 aa).

Fe cation contacts are provided by C94 and H136. The active site involves E137. A Fe cation-binding site is contributed by H140.

This sequence belongs to the polypeptide deformylase family. The cofactor is Fe(2+).

The enzyme catalyses N-terminal N-formyl-L-methionyl-[peptide] + H2O = N-terminal L-methionyl-[peptide] + formate. Removes the formyl group from the N-terminal Met of newly synthesized proteins. Requires at least a dipeptide for an efficient rate of reaction. N-terminal L-methionine is a prerequisite for activity but the enzyme has broad specificity at other positions. This Pelodictyon phaeoclathratiforme (strain DSM 5477 / BU-1) protein is Peptide deformylase.